A 153-amino-acid chain; its full sequence is Flagellar assembly factor FliW (153 aa).

The protein belongs to the FliW family. In terms of assembly, interacts with translational regulator CsrA and flagellin(s).

It localises to the cytoplasm. Functionally, acts as an anti-CsrA protein, binds CsrA and prevents it from repressing translation of its target genes, one of which is flagellin. Binds to flagellin and participates in the assembly of the flagellum. The protein is Flagellar assembly factor FliW of Heliobacterium modesticaldum (strain ATCC 51547 / Ice1).